Reading from the N-terminus, the 110-residue chain is U1-lycotoxin-Ls1kk (110 aa).

A signal peptide spans 1 to 20 (MKFVLLFGVLLVTLFSYSSA). The propeptide occupies 21–44 (EMFDDFDQADEDELLSLIEKEEAR). Disulfide bonds link C47-C62, C54-C71, C61-C89, and C73-C87.

It belongs to the neurotoxin 19 (CSTX) family. 03 subfamily. In terms of tissue distribution, expressed by the venom gland.

Its subcellular location is the secreted. The protein is U1-lycotoxin-Ls1kk of Lycosa singoriensis (Wolf spider).